The primary structure comprises 348 residues: 4-hydroxy-3-methylbut-2-en-1-yl diphosphate synthase (flavodoxin) (348 aa).

Positions 263, 266, 298, and 305 each coordinate [4Fe-4S] cluster.

It belongs to the IspG family. The cofactor is [4Fe-4S] cluster.

It carries out the reaction (2E)-4-hydroxy-3-methylbut-2-enyl diphosphate + oxidized [flavodoxin] + H2O + 2 H(+) = 2-C-methyl-D-erythritol 2,4-cyclic diphosphate + reduced [flavodoxin]. The protein operates within isoprenoid biosynthesis; isopentenyl diphosphate biosynthesis via DXP pathway; isopentenyl diphosphate from 1-deoxy-D-xylulose 5-phosphate: step 5/6. In terms of biological role, converts 2C-methyl-D-erythritol 2,4-cyclodiphosphate (ME-2,4cPP) into 1-hydroxy-2-methyl-2-(E)-butenyl 4-diphosphate. The chain is 4-hydroxy-3-methylbut-2-en-1-yl diphosphate synthase (flavodoxin) from Dehalococcoides mccartyi (strain ATCC BAA-2100 / JCM 16839 / KCTC 5957 / BAV1).